The primary structure comprises 364 residues: Chorismate synthase (364 aa).

Positions 48 and 54 each coordinate NADP(+). FMN-binding positions include 125-127 (RSS), Gly-282, 297-301 (KPPAS), and Arg-323.

It belongs to the chorismate synthase family. Homotetramer. Requires FMNH2 as cofactor.

The enzyme catalyses 5-O-(1-carboxyvinyl)-3-phosphoshikimate = chorismate + phosphate. Its pathway is metabolic intermediate biosynthesis; chorismate biosynthesis; chorismate from D-erythrose 4-phosphate and phosphoenolpyruvate: step 7/7. Its function is as follows. Catalyzes the anti-1,4-elimination of the C-3 phosphate and the C-6 proR hydrogen from 5-enolpyruvylshikimate-3-phosphate (EPSP) to yield chorismate, which is the branch point compound that serves as the starting substrate for the three terminal pathways of aromatic amino acid biosynthesis. This reaction introduces a second double bond into the aromatic ring system. In Chloroflexus aggregans (strain MD-66 / DSM 9485), this protein is Chorismate synthase.